Reading from the N-terminus, the 1441-residue chain is Lysophospholipase NTE1 (1441 aa).

Residues 1 to 22 (MWLTSYVLPRLKNILLLQFHIT) lie on the Lumenal side of the membrane. The chain crosses the membrane as a helical span at residues 23–43 (LPLNYLVLLLLSTVIITYLFL). Over 44–1441 (RTRILSNYSQ…ENMLQRRNSI (1398 aa)) the chain is Cytoplasmic. Disordered stretches follow at residues 154–173 (SNPS…PSND), 210–236 (THLN…TGEI), 376–445 (QDDT…NSSS), and 551–585 (NRTG…HFRN). Residues 376–388 (QDDTGSSASTIQK) show a composition bias toward polar residues. Residues 572 to 585 (SRTDRSESFDHFRN) are compositionally biased toward basic and acidic residues. A nucleoside 3',5'-cyclic phosphate-binding positions include 592–718 (NQFS…LTNS) and 707–836 (IYLK…VAKK). Residues 1137-1301 (LVLGGGGARG…VDNLPVTEMT (165 aa)) form the PNPLA domain. The GXGXXG signature appears at 1141–1146 (GGGARG). A GXSXG motif is present at residues 1168-1172 (GTSIG). The Nucleophile role is filled by S1170. D1288 (proton acceptor) is an active-site residue. The DGA/G motif lies at 1288 to 1290 (DGG).

Belongs to the NTE family.

The protein localises to the endoplasmic reticulum membrane. The catalysed reaction is a 1-acyl-sn-glycero-3-phosphocholine + H2O = sn-glycerol 3-phosphocholine + a fatty acid + H(+). With respect to regulation, inhibited by organophosphorus esters. Functionally, intracellular phospholipase B that catalyzes the double deacylation of phosphatidylcholine (PC) to glycerophosphocholine (GroPCho). Plays an important role in membrane lipid homeostasis. Responsible for the rapid PC turnover in response to inositol, elevated temperatures, or when choline is present in the growth medium. This chain is Lysophospholipase NTE1 (NTE1), found in Kluyveromyces lactis (strain ATCC 8585 / CBS 2359 / DSM 70799 / NBRC 1267 / NRRL Y-1140 / WM37) (Yeast).